The primary structure comprises 1074 residues: MGKRKKNDESSSSSSQKPCVSSSSDDFSVSFVRAEEDDVATTIRDKTASLKSNATHFSAASAAKGGMFDFRCCRSLFSRRRVLHSRTVRVGYGPVGHDANVTFTPNTVCNQKYNIFSFVPIVLFQQFKFFLNLYFLLMACSQFIPAIQIGAPITYWGPLGFVLTITLIREAFDDFVRYLRDRDLNSEKYEKLTRDGTRIEIRSADIEVGDVIIMHKDRRVPADVVLLRTTDKSGACFIRTDQLDGETDWKLRIPVPHTQHLPNEADIMELNCEVYAEKPQKDIHAFVGTLKITDDDNVQDGSLNVENVLWANTVVASGTAVGIVVYTGRETRSVMNTTLPESKVGLLDLEVNNLTKLLFCFVLVLSSVMVAMKGLDNLWYRYLMRFILLFSYIIPISLRVNLDMAKLFYSWQIGRDKHIPETVIRSSTIPEELGRISFLLSDKTGTLTKNEMHFKKIHLGTVAFSSDAFEEVGQHVRSAYAGRLAKHSFSAKLQNAVEAIALCHNVTPIFENGEISYQAASPDEVALVKWTETVGVRLASRDLHAMSLSVQLPNGQTLMKQFQILYVFPFTSETKRMGIIVKDETTDEVTLLMKGADTVMSGMVQYNDWLDEECSNMAREGLRTLVVARKPLSQAELEAFDRAYHAAKMSISDRSQNMANVVNRMLERDLQLLCLTGVEDRLQDQVTTSLELLRNAGIKIWMLTGDKLETAICIAKSSGLFSRSDNIHVFGNVHNRTDAHNELNNLRRKTDVALVMPGSALNVCLQYYEAEVAELVCACTAVVCCRCSPEQKAQIVQLLRKYRAPLRVAAIGDGGNDVSMIQAAHAGIGIDANEGKQASLAADFSITQFSHVCRLLLVHGRFCYKRSCALSQFVMHRGLIISTMQAIFSCVFYFASVSLYQGVLMVAYSTCYTMLPVFSLVVDRDVTATNALTYPELYKELGKGRSLSYKTFCIWVLISLYQGAVIMYGALLVFDADFIHVVSISFSALIVTELIMVAMTVHTWHWAMLLAQALSLGLYMISLILFDQYFDRQFVLSWVFISKTTAITAVSCLPLYIVKALRRKFSPPSYAKVN.

The segment at 1-26 is disordered; sequence MGKRKKNDESSSSSSQKPCVSSSSDD. Positions 10–26 are enriched in low complexity; the sequence is SSSSSSQKPCVSSSSDD. A run of 4 helical transmembrane segments spans residues 118–138, 143–163, 354–374, and 378–398; these read FVPI…FLLM, FIPA…GFVL, LTKL…AMKG, and LWYR…PISL. The active-site 4-aspartylphosphate intermediate is aspartate 442. Positions 442, 443, 444, 524, 570, 575, 594, 623, 624, 704, 705, 706, 786, and 792 each coordinate ATP. Position 442 (aspartate 442) interacts with Mg(2+). Threonine 444 provides a ligand contact to Mg(2+). Aspartate 813 contacts Mg(2+). Residues asparagine 816 and aspartate 817 each coordinate ATP. Aspartate 817 contacts Mg(2+). 5 helical membrane-spanning segments follow: residues 886–906, 954–974, 978–998, 1006–1026, and 1038–1058; these read AIFS…VLMV, IWVL…LLVF, FIHV…IMVA, WAML…LILF, and WVFI…LYIV.

This sequence belongs to the cation transport ATPase (P-type) (TC 3.A.3) family. Type IV subfamily. The cofactor is Mg(2+).

The protein resides in the cell membrane. The catalysed reaction is ATP + H2O + phospholipidSide 1 = ADP + phosphate + phospholipidSide 2.. In terms of biological role, plays a role in regulating membrane trafficking of cargo proteins during embryogenesis. Regulates snx-3 retromer-mediated endosomal sorting of mig-14, a transporter of Wnt egl-20 morphogen. Together with mon-2 and pad-1, may participate in the formation of endosomal carriers that direct mig-14 trafficking back to Golgi, away from lysosomal degradation. Required for Wnt egl-20 gradient formation along the anteroposterior body axis and migration of QL neuroblast descendants toward the posterior part. Maintains phosphatidylethanolamine (PE) asymmetry at the cell membrane and prevents the budding of ectosome vesicles that affect intercellular communication and morphogenesis. This Caenorhabditis elegans protein is Probable phospholipid-transporting ATPase tat-5 (tat-5).